A 593-amino-acid chain; its full sequence is NADH-quinone oxidoreductase subunit C/D (593 aa).

The segment at 1-184 (MTADNALYIP…DPYSLTLAKQ (184 aa)) is NADH dehydrogenase I subunit C. Positions 208–593 (DYMFLNLGPN…IDFVMADVDR (386 aa)) are NADH dehydrogenase I subunit D.

The protein in the N-terminal section; belongs to the complex I 30 kDa subunit family. In the C-terminal section; belongs to the complex I 49 kDa subunit family. As to quaternary structure, NDH-1 is composed of 13 different subunits. Subunits NuoB, CD, E, F, and G constitute the peripheral sector of the complex.

It is found in the cell inner membrane. The catalysed reaction is a quinone + NADH + 5 H(+)(in) = a quinol + NAD(+) + 4 H(+)(out). In terms of biological role, NDH-1 shuttles electrons from NADH, via FMN and iron-sulfur (Fe-S) centers, to quinones in the respiratory chain. The immediate electron acceptor for the enzyme in this species is believed to be ubiquinone. Couples the redox reaction to proton translocation (for every two electrons transferred, four hydrogen ions are translocated across the cytoplasmic membrane), and thus conserves the redox energy in a proton gradient. This Pseudomonas syringae pv. syringae (strain B728a) protein is NADH-quinone oxidoreductase subunit C/D.